The chain runs to 97 residues: Small ribosomal subunit protein uS19 (97 aa).

It belongs to the universal ribosomal protein uS19 family.

Protein S19 forms a complex with S13 that binds strongly to the 16S ribosomal RNA. The chain is Small ribosomal subunit protein uS19 from Salinibacter ruber (strain DSM 13855 / M31).